We begin with the raw amino-acid sequence, 109 residues long: uncharacterized protein (109 aa).

Residues 78–98 form a helical membrane-spanning segment; the sequence is YTCIMYIGLLCMFVLLYMTVI.

The protein localises to the membrane. This is an uncharacterized protein from Saccharomyces cerevisiae (strain ATCC 204508 / S288c) (Baker's yeast).